Here is a 341-residue protein sequence, read N- to C-terminus: UPF0324 membrane protein SMU_2059c (341 aa).

Helical transmembrane passes span 7–24, 28–47, 68–85, 90–107, 120–142, 147–169, 178–200, 211–233, 254–276, 291–310, and 317–339; these read KLSG…AWFL, FPLV…LAIF, FAVV…VLTV, LPII…AFLL, LVGV…VIQA, IAQS…PTLG, GFAL…AAAW, GATI…LSFY, VFPM…TALG, FCIV…VKLV, and IVLG…HLLG.

The protein belongs to the UPF0324 family.

The protein resides in the cell membrane. This is UPF0324 membrane protein SMU_2059c from Streptococcus mutans serotype c (strain ATCC 700610 / UA159).